The chain runs to 254 residues: MSFVALIPARMASTRLPDKPLADIAGKPMVVRVAERAARSGATGVYIATDDARVAQAAAAHGHAALLTRADHPTGTDRLAEAVEQLGLADDTVVVNVQGDEPLIDPALVDAVAATLQASPDAAIATCACPLADAEALFNPNVVKVVCGAGGRALYFSRAPIPWARDALAGGTRVLAPGLPALHHIGLYAYRAGFLRRFPALPQGALEHYEALEQLRALEHGHAIVVHRTPQPPMAGVDTPADLERVRALYADGL.

This sequence belongs to the KdsB family.

Its subcellular location is the cytoplasm. The catalysed reaction is 3-deoxy-alpha-D-manno-oct-2-ulosonate + CTP = CMP-3-deoxy-beta-D-manno-octulosonate + diphosphate. It participates in nucleotide-sugar biosynthesis; CMP-3-deoxy-D-manno-octulosonate biosynthesis; CMP-3-deoxy-D-manno-octulosonate from 3-deoxy-D-manno-octulosonate and CTP: step 1/1. Its pathway is bacterial outer membrane biogenesis; lipopolysaccharide biosynthesis. Functionally, activates KDO (a required 8-carbon sugar) for incorporation into bacterial lipopolysaccharide in Gram-negative bacteria. The polypeptide is 3-deoxy-manno-octulosonate cytidylyltransferase (Bordetella petrii (strain ATCC BAA-461 / DSM 12804 / CCUG 43448)).